The primary structure comprises 371 residues: RNA-binding protein 48 (371 aa).

The RRM domain maps to 46-124; it reads QYLLIQGVPA…GLLHVCYAPE (79 aa). Disordered regions lie at residues 157-191 and 348-371; these read KPVP…PESP and VPKP…RRRI. Residues 158-170 show a composition bias toward basic and acidic residues; the sequence is PVPEQKGTKDSRQ.

Belongs to the RBM48 family. Component of the minor spliceosome. Within this complex, interacts with ARMC7 and PRPF8/PRP8.

Functionally, as a component of the minor spliceosome, involved in the splicing of U12-type introns in pre-mRNAs. In Mus musculus (Mouse), this protein is RNA-binding protein 48 (Rbm48).